The chain runs to 946 residues: MKPLSSPLQQYWQTVVERLPEPLAEKSLSAQAKSVLTFSDFVQDSVIAHPEWLTELESQSPQADEWQHYAAWLQEALSNVSDEAGLMRELRLFRRRIMVRIAWAQTLALVTEESILQQLSHLAETLIVAARDWLYDACCREWGTPCNAQGEAQPLLILGMGKLGGGELNFSSDIDLIFAWPEHGCTQGGRRELDNAQFFTRMGQRLIKVLDQPTQDGFVYRVDMRLRPFGESGPLVLSFAALEDYYQEQGRDWERYAMVKARIMGDSEGVYANELRAMLRPFVFRRYIDFSVIQSLRNMKGMIAREVRRRGLTDNIKLGAGGIREIEFIVQVFQLIRGGREPSLQSRSLLPTLSAIAALHLLSENDAEQLRVAYLFLRRLENLLQSINDEQTQTLPSDELNRARLAWAMDFADWPQLTGALTAHMTNVRRVFNELIGDDESETQEESLSEQWRELWQDALQEDDTTPVLAHLSEDDRKQVLTLIADFRKELDKRTIGPRGRQVLDHLMPHLLSDVCAREDAAVTLSRITALLVGIVTRTTYLELLSEFRAALKHLISLCAASPMIASQLARYPLLLDELLDPNTLYQPTATDAYRDELRQYLLRVPEDDEEQQLEALRQFKQAQLLRIAAADIAGTLPVMKVSDHLTWLAEAMIDAVVQQAWVQMVARYGKPNHLNDREGRGFAVVGYGKLGGWELGYSSDLDLIFLHDCPMDAMTDGEREIDGRQFYLRLAQRIMHLFSTRTSSGILYEVDARLRPSGAAGMLVTSAEAFADYQKNEAWTWEHQALVRARVVYGDPQLTAHFDAVRREIMTLPREGKTLQTEVREMREKMRAHLGNKHRNRFDIKADEGGITDIEFITQYLVLRYAHEKPKLTRWSDNVRILELLAQNDIMEEQEAMALTRAYTTLRDELHHLALQELPGHVPEDCFTAERELVRASWQKWLVEE.

Positions 1–440 are adenylyl removase; it reads MKPLSSPLQQ…VFNELIGDDE (440 aa). The interval 449–946 is adenylyl transferase; that stretch reads SEQWRELWQD…ASWQKWLVEE (498 aa).

Belongs to the GlnE family. Mg(2+) serves as cofactor.

The enzyme catalyses [glutamine synthetase]-O(4)-(5'-adenylyl)-L-tyrosine + phosphate = [glutamine synthetase]-L-tyrosine + ADP. It catalyses the reaction [glutamine synthetase]-L-tyrosine + ATP = [glutamine synthetase]-O(4)-(5'-adenylyl)-L-tyrosine + diphosphate. Its function is as follows. Involved in the regulation of glutamine synthetase GlnA, a key enzyme in the process to assimilate ammonia. When cellular nitrogen levels are high, the C-terminal adenylyl transferase (AT) inactivates GlnA by covalent transfer of an adenylyl group from ATP to specific tyrosine residue of GlnA, thus reducing its activity. Conversely, when nitrogen levels are low, the N-terminal adenylyl removase (AR) activates GlnA by removing the adenylyl group by phosphorolysis, increasing its activity. The regulatory region of GlnE binds the signal transduction protein PII (GlnB) which indicates the nitrogen status of the cell. This is Bifunctional glutamine synthetase adenylyltransferase/adenylyl-removing enzyme from Escherichia coli O8 (strain IAI1).